The following is a 650-amino-acid chain: Secretin OutD (650 aa).

The N-terminal stretch at 1–18 (MLLLSGSVLLMASSLAWS) is a signal peptide. Residues 20–115 (EFSASFKGTD…LATDRQPGIG (96 aa)) are N0. The tract at residues 117 to 181 (EVVTRVVPVN…TIVERVDQTG (65 aa)) is N1. An N2 region spans residues 182–255 (DRNVTTIPLS…MVKQLDRQQA (74 aa)). Residues 258-330 (GNTKVIYLKY…DLEQVIAQLD (73 aa)) are N3. Residues 335–585 (QVLVEAIIAE…LFIRPSIIRD (251 aa)) are secretin. Residues 587–650 (SQFQSASASK…IVAFYPAGGK (64 aa)) are s domain.

This sequence belongs to the bacterial secretin family. GSP D subfamily. Forms a cylindrical channel with 15 subunits.

It is found in the cell outer membrane. Involved in a type II secretion system (T2SS, formerly general secretion pathway, GSP) for the export of proteins. Required for the translocation of the multiple pectic enzymes. This subunit forms the outer membrane channel. This Pectobacterium carotovorum subsp. carotovorum (Erwinia carotovora subsp. carotovora) protein is Secretin OutD (outD).